The sequence spans 53 residues: Antitoxin RelB3 (53 aa).

In terms of assembly, forms heterodimers with RelE and possibly a heterotetramer RelE3-RelB3(2)-RelE3 from 2 heterodimers. The heterotetramer is probably not very stable in solution.

Antitoxin component of a type II toxin-antitoxin (TA) system. Probably neutralizes the toxic activity of cognate toxin RelE. The protein is Antitoxin RelB3 (relB3) of Methanocaldococcus jannaschii (strain ATCC 43067 / DSM 2661 / JAL-1 / JCM 10045 / NBRC 100440) (Methanococcus jannaschii).